The chain runs to 407 residues: Cell division protein FtsZ (407 aa).

GTP is bound by residues 18–22 (GGGVN), 105–107 (GTG), glutamate 136, arginine 140, and aspartate 184. A disordered region spans residues 312-407 (FDGGQPPARR…EELDVPDFLK (96 aa)). Composition is skewed to low complexity over residues 336 to 348 (AAPARSSAESTRP) and 368 to 377 (APATASGESS). Positions 381–390 (VSPPHVPPAR) are enriched in pro residues. A compositionally biased stretch (acidic residues) spans 396-407 (QAEELDVPDFLK).

The protein belongs to the FtsZ family. Homodimer. Polymerizes to form a dynamic ring structure in a strictly GTP-dependent manner. Interacts directly with several other division proteins.

The protein resides in the cytoplasm. Essential cell division protein that forms a contractile ring structure (Z ring) at the future cell division site. The regulation of the ring assembly controls the timing and the location of cell division. One of the functions of the FtsZ ring is to recruit other cell division proteins to the septum to produce a new cell wall between the dividing cells. Binds GTP and shows GTPase activity. This is Cell division protein FtsZ from Streptomyces griseus.